The sequence spans 624 residues: Phosphoenolpyruvate carboxykinase [GTP] (624 aa).

Substrate is bound by residues Arg-88 and 222-224 (YGG). The Mn(2+) site is built by Lys-231 and His-250. Ser-272 is a substrate binding site. 273-278 (MCGKTS) lines the GTP pocket. Residue Cys-274 is part of the active site. A Mn(2+)-binding site is contributed by Asp-291. Residue 386-388 (NAR) participates in substrate binding. Residues Arg-388 and Arg-420 each contribute to the GTP site.

It belongs to the phosphoenolpyruvate carboxykinase [GTP] family. Mn(2+) serves as cofactor.

It is found in the cytoplasm. The catalysed reaction is oxaloacetate + GTP = phosphoenolpyruvate + GDP + CO2. It functions in the pathway carbohydrate biosynthesis; gluconeogenesis. Catalyzes the conversion of oxaloacetate (OAA) to phosphoenolpyruvate (PEP), the rate-limiting step in the metabolic pathway that produces glucose from lactate and other precursors derived from the citric acid cycle. The protein is Phosphoenolpyruvate carboxykinase [GTP] of Pyrococcus furiosus (strain ATCC 43587 / DSM 3638 / JCM 8422 / Vc1).